A 386-amino-acid chain; its full sequence is Enoyl-[acyl-carrier-protein] reductase 2, mitochondrial (386 aa).

A mitochondrion-targeting transit peptide spans 1–22 (MYSVLKQSIRPRLLATHNQFRT). The active-site Proton donor is the Y79. Residues N172, 199–202 (TSAV), 222–224 (RDR), 296–299 (YGGM), 321–323 (FWV), and K381 each bind NADP(+).

It belongs to the zinc-containing alcohol dehydrogenase family. Quinone oxidoreductase subfamily. Homodimer and heterodimer with ETR1.

The protein resides in the mitochondrion. The enzyme catalyses a 2,3-saturated acyl-[ACP] + NADP(+) = a (2E)-enoyl-[ACP] + NADPH + H(+). Required for respiration and the maintenance of the mitochondrial compartment. Oxidoreductase with a preference for short and medium chain substrates, including trans-2-hexenoyl-CoA (C6), trans-2-decenoyl-CoA (C10), and trans-2-hexadecenoyl-CoA (C16). May play a role in mitochondrial fatty acid synthesis. This is Enoyl-[acyl-carrier-protein] reductase 2, mitochondrial (ETR2) from Candida tropicalis (Yeast).